A 388-amino-acid chain; its full sequence is RNA binding motif protein, X-linked-like-1 (388 aa).

The region spanning 8–86 is the RRM domain; it reads GKLFIGGLNT…KAIKVEQATK (79 aa). Over residues 61–80 the composition is skewed to basic and acidic residues; it reads DAKDVARDMNGKSLDGKAIK. The segment at 61–388 is disordered; the sequence is DAKDVARDMN…SDRGGGQKQI (328 aa). Lys80 participates in a covalent cross-link: Glycyl lysine isopeptide (Lys-Gly) (interchain with G-Cter in SUMO2). A Phosphoserine modification is found at Ser88. Residues 148–161 show a composition bias toward pro residues; it reads RGPPPRSGGPPPKR. 2 stretches are compositionally biased toward basic and acidic residues: residues 191–212 and 238–271; these read PRRE…DGYS and YTYR…EYSD. Low complexity predominate over residues 320 to 332; it reads SRDSYSSSRSDLY. 2 stretches are compositionally biased toward basic and acidic residues: residues 333-344 and 377-388; these read SSDRDRVGRQER and SRSDRGGGQKQI.

The protein localises to the nucleus. In terms of biological role, RNA-binding protein which may be involved in pre-mRNA splicing. In Rattus norvegicus (Rat), this protein is RNA binding motif protein, X-linked-like-1 (Rbmxl1).